A 1256-amino-acid polypeptide reads, in one-letter code: Bifunctional autolysin (1256 aa).

The first 29 residues, 1-29, serve as a signal peptide directing secretion; the sequence is MAKKFNYKLPSMVALTLVGSAVTAHQVQA. Residues 103–138 are compositionally biased toward polar residues; that stretch reads GDTRANQSATTNNTQPVAKSTSTTAPKTNTNVTNAG. Disordered stretches follow at residues 103-151, 172-214, and 419-440; these read GDTR…NSEN, KTAA…KTSL, and TQST…PSTG. Composition is skewed to low complexity over residues 172-196 and 421-439; these read KTAA…KVTT and STTT…KPST. Residues 199-775 form an N-acetylmuramoyl-L-alanine amidase region; that stretch reads ASAQPRSVAA…AVAQPKTAVK (577 aa). 7 consecutive GW domains span residues 443-517, 519-593, 612-686, 688-762, 784-859, 861-936, and 943-1017; these read TVAA…YNTA, SPVN…DTAK, TVSS…YNNA, SPVN…VPAA, TTQT…VQNL, KEVK…APTA, and AAKD…KELI. An endo-beta-N-acetylglucosaminidase region spans residues 776–1256; it reads AYTVTKPQTT…GKYFDIPQYK (481 aa).

In the N-terminal section; belongs to the N-acetylmuramoyl-L-alanine amidase 2 family. The protein in the C-terminal section; belongs to the glycosyl hydrolase 73 family. In terms of assembly, oligomer; forms a ring structure at the cell surface which is important for efficient partitioning of daughter cells after cell division. Undergoes proteolytic processing to generate the two extracellular lytic enzymes, probably at the septal region on the cell surface.

The protein localises to the secreted. It catalyses the reaction Hydrolyzes the link between N-acetylmuramoyl residues and L-amino acid residues in certain cell-wall glycopeptides.. The catalysed reaction is an N(4)-(oligosaccharide-(1-&gt;3)-[oligosaccharide-(1-&gt;6)]-beta-D-Man-(1-&gt;4)-beta-D-GlcNAc-(1-&gt;4)-alpha-D-GlcNAc)-L-asparaginyl-[protein] + H2O = an oligosaccharide-(1-&gt;3)-[oligosaccharide-(1-&gt;6)]-beta-D-Man-(1-&gt;4)-D-GlcNAc + N(4)-(N-acetyl-beta-D-glucosaminyl)-L-asparaginyl-[protein]. Its function is as follows. Endohydrolysis of the di-N-acetylchitobiosyl unit in high-mannose glycopeptides and glycoproteins containing the -[(Man)5(GlcNAc)2]-Asn structure. One N-acetyl-D-glucosamine residue remains attached to the protein; the rest of the oligosaccharide is released intact. Cleaves the peptidoglycan connecting the daughter cells at the end of the cell division cycle, resulting in the separation of the two newly divided cells. Acts as an autolysin in penicillin-induced lysis. In Staphylococcus aureus (strain NCTC 8325 / PS 47), this protein is Bifunctional autolysin (atl).